Consider the following 256-residue polypeptide: Small ribosomal subunit protein eS1 (256 aa).

Basic residues predominate over residues 1–18 (MAVGKNKRLSKGKKGLKK). Positions 1–20 (MAVGKNKRLSKGKKGLKKRT) are disordered. Residue Ala-2 is modified to N-acetylalanine; partial.

This sequence belongs to the eukaryotic ribosomal protein eS1 family. In terms of assembly, component of the small ribosomal subunit. Mature ribosomes consist of a small (40S) and a large (60S) subunit. The 40S subunit contains about 33 different proteins and 1 molecule of RNA (18S). The 60S subunit contains about 49 different proteins and 3 molecules of RNA (25S, 5.8S and 5S).

It localises to the cytoplasm. In Talaromyces stipitatus (strain ATCC 10500 / CBS 375.48 / QM 6759 / NRRL 1006) (Penicillium stipitatum), this protein is Small ribosomal subunit protein eS1 (rps1).